A 148-amino-acid chain; its full sequence is Deoxyuridine 5'-triphosphate nucleotidohydrolase (148 aa).

Substrate contacts are provided by residues 67–69, Asn-80, 84–86, and Met-94; these read RSG and LID.

This sequence belongs to the dUTPase family. It depends on Mg(2+) as a cofactor.

It catalyses the reaction dUTP + H2O = dUMP + diphosphate + H(+). The protein operates within pyrimidine metabolism; dUMP biosynthesis; dUMP from dCTP (dUTP route): step 2/2. In terms of biological role, this enzyme is involved in nucleotide metabolism: it produces dUMP, the immediate precursor of thymidine nucleotides and it decreases the intracellular concentration of dUTP so that uracil cannot be incorporated into DNA. The chain is Deoxyuridine 5'-triphosphate nucleotidohydrolase from Burkholderia cenocepacia (strain ATCC BAA-245 / DSM 16553 / LMG 16656 / NCTC 13227 / J2315 / CF5610) (Burkholderia cepacia (strain J2315)).